Reading from the N-terminus, the 492-residue chain is 2-succinylbenzoate--CoA ligase (492 aa).

The protein belongs to the ATP-dependent AMP-binding enzyme family. MenE subfamily.

The enzyme catalyses 2-succinylbenzoate + ATP + CoA = 2-succinylbenzoyl-CoA + AMP + diphosphate. Its pathway is quinol/quinone metabolism; 1,4-dihydroxy-2-naphthoate biosynthesis; 1,4-dihydroxy-2-naphthoate from chorismate: step 5/7. The protein operates within quinol/quinone metabolism; menaquinone biosynthesis. Its function is as follows. Converts 2-succinylbenzoate (OSB) to 2-succinylbenzoyl-CoA (OSB-CoA). In Staphylococcus aureus (strain MRSA252), this protein is 2-succinylbenzoate--CoA ligase.